The chain runs to 225 residues: Germin-like protein 3-1 (225 aa).

Positions 1–22 (MRAAVAHRILLSLALFAVLCRC) are cleaved as a signal peptide. The cysteines at positions 31 and 51 are disulfide-linked. The Cupin type-1 domain occupies 65–216 (SALSRATNPA…AFKITGQDVQ (152 aa)). Asn81 is a glycosylation site (N-linked (GlcNAc...) asparagine). Mn(2+)-binding residues include His115, His117, Glu122, and His161.

This sequence belongs to the germin family. Oligomer (believed to be a pentamer but probably hexamer).

Its subcellular location is the secreted. The protein resides in the extracellular space. It is found in the apoplast. Functionally, may play a role in plant defense. Probably has no oxalate oxidase activity even if the active site is conserved. The protein is Germin-like protein 3-1 of Oryza sativa subsp. japonica (Rice).